The following is a 328-amino-acid chain: L-lactate dehydrogenase (328 aa).

Residues V18, E39, K46, Y71, and 85 to 86 contribute to the NAD(+) site; that span reads GA. 2 residues coordinate substrate: Q88 and R94. NAD(+)-binding positions include S107, 124-126, and S149; that span reads AAN. Position 126–129 (126–129) interacts with substrate; the sequence is NPVD. 154–157 is a binding site for substrate; it reads DSAR. Beta-D-fructose 1,6-bisphosphate is bound by residues R159 and H174. H181 serves as the catalytic Proton acceptor. At Y226 the chain carries Phosphotyrosine. T235 contacts substrate.

Belongs to the LDH/MDH superfamily. LDH family. Homotetramer.

The protein localises to the cytoplasm. It catalyses the reaction (S)-lactate + NAD(+) = pyruvate + NADH + H(+). Its pathway is fermentation; pyruvate fermentation to lactate; (S)-lactate from pyruvate: step 1/1. With respect to regulation, allosterically activated by fructose 1,6-bisphosphate (FBP). Its function is as follows. Catalyzes the conversion of lactate to pyruvate. The chain is L-lactate dehydrogenase from Streptococcus thermophilus (strain ATCC BAA-250 / LMG 18311).